An 876-amino-acid chain; its full sequence is Alanine--tRNA ligase (876 aa).

The Zn(2+) site is built by H560, H564, C662, and H666.

It belongs to the class-II aminoacyl-tRNA synthetase family. Requires Zn(2+) as cofactor.

The protein resides in the cytoplasm. The enzyme catalyses tRNA(Ala) + L-alanine + ATP = L-alanyl-tRNA(Ala) + AMP + diphosphate. Catalyzes the attachment of alanine to tRNA(Ala) in a two-step reaction: alanine is first activated by ATP to form Ala-AMP and then transferred to the acceptor end of tRNA(Ala). Also edits incorrectly charged Ser-tRNA(Ala) and Gly-tRNA(Ala) via its editing domain. In Synechococcus sp. (strain ATCC 27144 / PCC 6301 / SAUG 1402/1) (Anacystis nidulans), this protein is Alanine--tRNA ligase.